The primary structure comprises 323 residues: Beta-ketoacyl-[acyl-carrier-protein] synthase III (323 aa).

Active-site residues include Cys-114 and His-250. Residues 251–255 are ACP-binding; it reads QANLR. Asn-280 is a catalytic residue.

This sequence belongs to the thiolase-like superfamily. FabH family. As to quaternary structure, homodimer.

The protein localises to the cytoplasm. It carries out the reaction malonyl-[ACP] + acetyl-CoA + H(+) = 3-oxobutanoyl-[ACP] + CO2 + CoA. Its pathway is lipid metabolism; fatty acid biosynthesis. Its function is as follows. Catalyzes the condensation reaction of fatty acid synthesis by the addition to an acyl acceptor of two carbons from malonyl-ACP. Catalyzes the first condensation reaction which initiates fatty acid synthesis and may therefore play a role in governing the total rate of fatty acid production. Possesses both acetoacetyl-ACP synthase and acetyl transacylase activities. Its substrate specificity determines the biosynthesis of branched-chain and/or straight-chain of fatty acids. The chain is Beta-ketoacyl-[acyl-carrier-protein] synthase III from Cereibacter sphaeroides (strain ATCC 17025 / ATH 2.4.3) (Rhodobacter sphaeroides).